We begin with the raw amino-acid sequence, 194 residues long: Large ribosomal subunit protein eL15 (194 aa).

The segment at 161–194 is disordered; that stretch reads GLTSAGKKGRGLMYKGKGAEKARPSVRANGKKTK.

It belongs to the eukaryotic ribosomal protein eL15 family.

The polypeptide is Large ribosomal subunit protein eL15 (Methanococcus maripaludis (strain C5 / ATCC BAA-1333)).